We begin with the raw amino-acid sequence, 315 residues long: ATP synthase gamma chain (315 aa).

Belongs to the ATPase gamma chain family. F-type ATPases have 2 components, CF(1) - the catalytic core - and CF(0) - the membrane proton channel. CF(1) has five subunits: alpha(3), beta(3), gamma(1), delta(1), epsilon(1). CF(0) has three main subunits: a, b and c.

It localises to the cellular thylakoid membrane. In terms of biological role, produces ATP from ADP in the presence of a proton gradient across the membrane. The gamma chain is believed to be important in regulating ATPase activity and the flow of protons through the CF(0) complex. The sequence is that of ATP synthase gamma chain from Nostoc punctiforme (strain ATCC 29133 / PCC 73102).